We begin with the raw amino-acid sequence, 346 residues long: Probable alpha-1,2-galactosyltransferase gmh2 (346 aa).

Topologically, residues 1-11 (MALMLSRIPRR) are cytoplasmic. The helical; Signal-anchor for type II membrane protein transmembrane segment at 12 to 32 (FFFLFLTVGLIAGAFLYSLIY) threads the bilayer. At 33 to 346 (FVDVDLVSKV…LWQKFYALID (314 aa)) the chain is on the lumenal side. Asn64, Asn142, and Asn224 each carry an N-linked (GlcNAc...) asparagine glycan.

Belongs to the glycosyltransferase 34 family.

It localises to the golgi apparatus membrane. The sequence is that of Probable alpha-1,2-galactosyltransferase gmh2 (gmh2) from Schizosaccharomyces pombe (strain 972 / ATCC 24843) (Fission yeast).